A 212-amino-acid polypeptide reads, in one-letter code: uncharacterized protein (212 aa).

An N-terminal signal peptide occupies residues 1–20 (MRRVLLCFLTLILLLPAASA).

This is an uncharacterized protein from Archaeoglobus fulgidus (strain ATCC 49558 / DSM 4304 / JCM 9628 / NBRC 100126 / VC-16).